Consider the following 358-residue polypeptide: Peptide chain release factor 1 (358 aa).

Gln233 is subject to N5-methylglutamine.

It belongs to the prokaryotic/mitochondrial release factor family. Post-translationally, methylated by PrmC. Methylation increases the termination efficiency of RF1.

It is found in the cytoplasm. Its function is as follows. Peptide chain release factor 1 directs the termination of translation in response to the peptide chain termination codons UAG and UAA. The protein is Peptide chain release factor 1 of Beijerinckia indica subsp. indica (strain ATCC 9039 / DSM 1715 / NCIMB 8712).